The primary structure comprises 629 residues: Phosphomethylpyrimidine synthase (629 aa).

A disordered region spans residues Met1–Ser21. Substrate contacts are provided by residues Asn233, Met262, Tyr291, His327, Ser347–Gly349, Asp388–Arg391, and Glu427. His431 is a binding site for Zn(2+). Tyr454 is a binding site for substrate. His495 serves as a coordination point for Zn(2+). Cys575, Cys578, and Cys583 together coordinate [4Fe-4S] cluster.

The protein belongs to the ThiC family. As to quaternary structure, homodimer. [4Fe-4S] cluster serves as cofactor.

The catalysed reaction is 5-amino-1-(5-phospho-beta-D-ribosyl)imidazole + S-adenosyl-L-methionine = 4-amino-2-methyl-5-(phosphooxymethyl)pyrimidine + CO + 5'-deoxyadenosine + formate + L-methionine + 3 H(+). It functions in the pathway cofactor biosynthesis; thiamine diphosphate biosynthesis. In terms of biological role, catalyzes the synthesis of the hydroxymethylpyrimidine phosphate (HMP-P) moiety of thiamine from aminoimidazole ribotide (AIR) in a radical S-adenosyl-L-methionine (SAM)-dependent reaction. This is Phosphomethylpyrimidine synthase from Pseudomonas syringae pv. syringae (strain B728a).